The sequence spans 203 residues: A-type ATP synthase subunit E (203 aa).

It belongs to the V-ATPase E subunit family. As to quaternary structure, has multiple subunits with at least A(3), B(3), C, D, E, F, H, I and proteolipid K(x).

It localises to the cell membrane. Component of the A-type ATP synthase that produces ATP from ADP in the presence of a proton gradient across the membrane. This is A-type ATP synthase subunit E from Methanococcus aeolicus (strain ATCC BAA-1280 / DSM 17508 / OCM 812 / Nankai-3).